Reading from the N-terminus, the 509-residue chain is Dihydrolipoyl dehydrogenase, mitochondrial (509 aa).

The transit peptide at 1–35 directs the protein to the mitochondrion; that stretch reads MQSWSRVYRSLAKKGHFNRISHGLQGVSSVPLRTY. Lysine 66 carries the N6-acetyllysine; alternate modification. Residue lysine 66 is modified to N6-succinyllysine; alternate. FAD-binding positions include 71-80 and lysine 89; that span reads EKNETLGGTC. A disulfide bridge connects residues cysteine 80 and cysteine 85. N6-acetyllysine; alternate occurs at positions 104, 122, 132, and 143. An N6-succinyllysine; alternate mark is found at lysine 104, lysine 122, lysine 132, and lysine 143. Position 154 (glycine 154) interacts with FAD. 2 positions are modified to N6-succinyllysine: lysine 159 and lysine 166. 183–185 provides a ligand contact to FAD; that stretch reads TGS. NAD(+) is bound by residues 220–227 and glutamate 243; that span reads GAGVIGVE. 2 positions are modified to N6-succinyllysine: lysine 273 and lysine 277. Valine 278 lines the NAD(+) pocket. Residues serine 285 and serine 297 each carry the phosphoserine modification. NAD(+) is bound at residue glycine 314. The residue at position 334 (lysine 334) is an N6-acetyllysine; alternate. At lysine 334 the chain carries N6-succinyllysine; alternate. Lysine 346 is modified (N6-acetyllysine). Residues aspartate 355 and 361 to 364 contribute to the FAD site; that span reads MLAH. The residue at position 410 (lysine 410) is an N6-acetyllysine; alternate. N6-succinyllysine; alternate is present on lysine 410. An N6-acetyllysine mark is found at lysine 417 and lysine 420. The residue at position 430 (lysine 430) is an N6-succinyllysine. The active-site Proton acceptor is the histidine 487. Residue lysine 505 is modified to N6-acetyllysine; alternate. Lysine 505 carries the post-translational modification N6-succinyllysine; alternate.

It belongs to the class-I pyridine nucleotide-disulfide oxidoreductase family. Homodimer. Part of the multimeric pyruvate dehydrogenase complex that contains multiple copies of pyruvate dehydrogenase (subunits PDHA (PDHA1 or PDHA2) and PDHB, E1), dihydrolipoamide acetyltransferase (DLAT, E2) and lipoamide dehydrogenase (DLD, E3). These subunits are bound to an inner core composed of about 48 DLAT and 12 PDHX molecules (by non covalent bonds). The 2-oxoglutarate dehydrogenase complex is composed of OGDH (2-oxoglutarate dehydrogenase; E1), DLST (dihydrolipoamide succinyltransferase; E2), DLD (dihydrolipoamide dehydrogenase; E3) and the assembly factor KGD4. It contains multiple copies of the three enzymatic components (E1, E2 and E3). In the nucleus, the 2-oxoglutarate dehydrogenase complex associates with KAT2A. Interacts with PDHX. It depends on FAD as a cofactor. In terms of processing, tyrosine phosphorylated. In terms of tissue distribution, expressed in liver (at protein level).

Its subcellular location is the mitochondrion matrix. It localises to the nucleus. It is found in the cell projection. The protein resides in the cilium. The protein localises to the flagellum. Its subcellular location is the cytoplasmic vesicle. It localises to the secretory vesicle. It is found in the acrosome. The catalysed reaction is N(6)-[(R)-dihydrolipoyl]-L-lysyl-[protein] + NAD(+) = N(6)-[(R)-lipoyl]-L-lysyl-[protein] + NADH + H(+). Lipoamide dehydrogenase is a component of the glycine cleavage system as well as an E3 component of three alpha-ketoacid dehydrogenase complexes (pyruvate-, alpha-ketoglutarate-, and branched-chain amino acid-dehydrogenase complex). The 2-oxoglutarate dehydrogenase complex is mainly active in the mitochondrion. A fraction of the 2-oxoglutarate dehydrogenase complex also localizes in the nucleus and is required for lysine succinylation of histones: associates with KAT2A on chromatin and provides succinyl-CoA to histone succinyltransferase KAT2A. In monomeric form may have additional moonlighting function as serine protease. Involved in the hyperactivation of spermatazoa during capacitation and in the spermatazoal acrosome reaction. This Mus musculus (Mouse) protein is Dihydrolipoyl dehydrogenase, mitochondrial (Dld).